The chain runs to 379 residues: Alternative oxidase 1, mitochondrial (379 aa).

Low complexity predominate over residues 33–50 (TTTTSTKSRSSTSTAATT). Residues 33 to 76 (TTTTSTKSRSSTSTAATTVGNSNPKSPIDEDNLEKPGTIPTKHK) form a disordered region. Fe cation contacts are provided by E180, E219, and H222. Residues 234 to 256 (WFTRSIIYIGQGVFTNIFFLVYL) form a helical membrane-spanning segment. Fe cation contacts are provided by E270, E271, E326, and H329.

The protein belongs to the alternative oxidase family. It depends on Fe cation as a cofactor.

It is found in the mitochondrion inner membrane. In terms of biological role, catalyzes cyanide-resistant oxygen consumption. May increase respiration when the cytochrome respiratory pathway is restricted, or in response to low temperatures. The chain is Alternative oxidase 1, mitochondrial (AOX1) from Candida albicans (Yeast).